The sequence spans 209 residues: Protein GET1 (209 aa).

Residues 1 to 3 (MSL) are Lumenal-facing. Residues 4 to 23 (LLVIFLLELVVQLVNTIGAK) form a helical membrane-spanning segment. Residues 24 to 110 (TINNLLWRFY…SFSRKLTIYR (87 aa)) lie on the Cytoplasmic side of the membrane. Residues 74-101 (WARLQRKHDKLMDELEKKKSQLDAHRTS) are a coiled coil. The chain crosses the membrane as a helical span at residues 111-131 (WILTRGMQWFLCFWFSSQPMF). Residues 132 to 155 (WLPYGWFPYWVEWLVSFPNAPMGS) lie on the Lumenal side of the membrane. The chain crosses the membrane as a helical span at residues 156–172 (VSIVVWQSACSGVLALV). Over 173-209 (IEAVMAVVRYTGGTGMQKQRQPVPAAGGAPGTSKKDL) the chain is Cytoplasmic. The disordered stretch occupies residues 188–209 (MQKQRQPVPAAGGAPGTSKKDL).

This sequence belongs to the WRB/GET1 family. As to quaternary structure, interacts with GET3.

The protein resides in the endoplasmic reticulum membrane. Its function is as follows. Required for the post-translational delivery of tail-anchored (TA) proteins to the endoplasmic reticulum. Acts as a membrane receptor for soluble GET3, which recognizes and selectively binds the transmembrane domain of TA proteins in the cytosol. The polypeptide is Protein GET1 (Chaetomium thermophilum (strain DSM 1495 / CBS 144.50 / IMI 039719) (Thermochaetoides thermophila)).